The sequence spans 63 residues: Cecropin-C (63 aa).

The first 23 residues, Met-1–Ala-23, serve as a signal peptide directing secretion. At Arg-62 the chain carries Arginine amide.

It belongs to the cecropin family.

The protein localises to the secreted. Its function is as follows. Cecropins have lytic and antibacterial activity against several Gram-positive and Gram-negative bacteria. This is Cecropin-C (CecC) from Drosophila mauritiana (Fruit fly).